The chain runs to 439 residues: Putrescine transporter PotE (439 aa).

Helical transmembrane passes span 10 to 30, 40 to 60, 91 to 111, 114 to 134, 152 to 172, 186 to 206, 225 to 245, 276 to 296, 321 to 341, 354 to 374, 387 to 407, and 410 to 430; these read GVVQLTILTMVNMMGSGIIML, ISIISWLVTAVGSMALAWAFA, TYGVSLLIANVAIAISAVGYG, LLGASLSPVQIGLATIGVLWI, ITVWGVIIPVVGLCIIGWFWF, APFFSAVGSSIAMTLWAFLGL, IAVLGGTLGAAVIYIVSTNVI, VIMALMVMSCCGSLLGWQFTI, APVQGMLTIVIIQSGLALMTI, NLAVVTNIIPYILSMAALVII, VANFVAFVGAMYSFYALYSSG, and AMLYGSIVTFLGWTLYGLVSP.

Belongs to the amino acid-polyamine-organocation (APC) superfamily. Basic amino acid/polyamine antiporter (APA) (TC 2.A.3.2) family.

The protein resides in the cell inner membrane. The enzyme catalyses putrescine(in) + H(+)(in) = putrescine(out) + H(+)(out). It carries out the reaction putrescine(in) + L-ornithine(out) = putrescine(out) + L-ornithine(in). In terms of biological role, catalyzes both the uptake and excretion of putrescine. The uptake of putrescine is dependent on the membrane potential and the excretion involves putrescine-ornithine antiporter activity. In Escherichia coli O6:H1 (strain CFT073 / ATCC 700928 / UPEC), this protein is Putrescine transporter PotE.